Consider the following 406-residue polypeptide: Succinylornithine transaminase (406 aa).

Lys-252 bears the N6-(pyridoxal phosphate)lysine mark.

This sequence belongs to the class-III pyridoxal-phosphate-dependent aminotransferase family. AstC subfamily. Requires pyridoxal 5'-phosphate as cofactor.

The catalysed reaction is N(2)-succinyl-L-ornithine + 2-oxoglutarate = N-succinyl-L-glutamate 5-semialdehyde + L-glutamate. It functions in the pathway amino-acid degradation; L-arginine degradation via AST pathway; L-glutamate and succinate from L-arginine: step 3/5. In terms of biological role, catalyzes the transamination of N(2)-succinylornithine and alpha-ketoglutarate into N(2)-succinylglutamate semialdehyde and glutamate. Can also act as an acetylornithine aminotransferase. The sequence is that of Succinylornithine transaminase from Escherichia coli (strain SMS-3-5 / SECEC).